Consider the following 78-residue polypeptide: Acyl carrier protein (78 aa).

The Carrier domain occupies 2 to 77 (SDTVERVKKI…DAVKFIDKAS (76 aa)). An O-(pantetheine 4'-phosphoryl)serine modification is found at Ser37.

This sequence belongs to the acyl carrier protein (ACP) family. Post-translationally, 4'-phosphopantetheine is transferred from CoA to a specific serine of apo-ACP by AcpS. This modification is essential for activity because fatty acids are bound in thioester linkage to the sulfhydryl of the prosthetic group.

Its subcellular location is the cytoplasm. Its pathway is lipid metabolism; fatty acid biosynthesis. In terms of biological role, carrier of the growing fatty acid chain in fatty acid biosynthesis. This Bartonella henselae (strain ATCC 49882 / DSM 28221 / CCUG 30454 / Houston 1) (Rochalimaea henselae) protein is Acyl carrier protein.